The sequence spans 20 residues: Cathepsin L-like cysteine proteinase (20 aa).

It belongs to the peptidase C1 family.

The protein localises to the lysosome. In terms of biological role, thiol protease. In Fasciola hepatica (Liver fluke), this protein is Cathepsin L-like cysteine proteinase.